The chain runs to 309 residues: Ribosomal RNA small subunit methyltransferase H (309 aa).

S-adenosyl-L-methionine contacts are provided by residues 33–35, D53, F79, D100, and Q107; that span reads GGH.

It belongs to the methyltransferase superfamily. RsmH family.

Its subcellular location is the cytoplasm. The catalysed reaction is cytidine(1402) in 16S rRNA + S-adenosyl-L-methionine = N(4)-methylcytidine(1402) in 16S rRNA + S-adenosyl-L-homocysteine + H(+). Functionally, specifically methylates the N4 position of cytidine in position 1402 (C1402) of 16S rRNA. This Clostridium botulinum (strain ATCC 19397 / Type A) protein is Ribosomal RNA small subunit methyltransferase H.